Here is a 373-residue protein sequence, read N- to C-terminus: Carboxylesterase/phospholipase LipF (373 aa).

Positions 116 to 118 (HGG) match the Involved in the stabilization of the negatively charged intermediate by the formation of the oxyanion hole motif. Active-site residues include Ser186, Glu285, and His315.

Belongs to the 'GDXG' lipolytic enzyme family.

It carries out the reaction a carboxylic ester + H2O = an alcohol + a carboxylate + H(+). The catalysed reaction is a 1,2-diacyl-sn-glycero-3-phosphocholine + H2O = phosphocholine + a 1,2-diacyl-sn-glycerol + H(+). In terms of biological role, a short-chain esterase and phospholipase. The polypeptide is Carboxylesterase/phospholipase LipF (Mycobacterium tuberculosis (strain CDC 1551 / Oshkosh)).